The chain runs to 118 residues: Large ribosomal subunit protein uL18 (118 aa).

It belongs to the universal ribosomal protein uL18 family. In terms of assembly, part of the 50S ribosomal subunit; part of the 5S rRNA/L5/L18/L25 subcomplex. Contacts the 5S and 23S rRNAs.

Its function is as follows. This is one of the proteins that bind and probably mediate the attachment of the 5S RNA into the large ribosomal subunit, where it forms part of the central protuberance. This is Large ribosomal subunit protein uL18 from Ligilactobacillus salivarius (strain UCC118) (Lactobacillus salivarius).